The chain runs to 168 residues: Cell division inhibitor SulA (168 aa).

Positions 105 to 111 are ftsZ binding; that stretch reads ALETGNY. Positions 161–168 are lon protease binding; it reads RIHSGMVH.

Belongs to the SulA family. Interacts with FtsZ. In terms of processing, is rapidly cleaved and degraded by the Lon protease once DNA damage is repaired.

Functionally, component of the SOS system and an inhibitor of cell division. Accumulation of SulA causes rapid cessation of cell division and the appearance of long, non-septate filaments. In the presence of GTP, binds a polymerization-competent form of FtsZ in a 1:1 ratio, thus inhibiting FtsZ polymerization and therefore preventing it from participating in the assembly of the Z ring. This mechanism prevents the premature segregation of damaged DNA to daughter cells during cell division. The sequence is that of Cell division inhibitor SulA from Cronobacter sakazakii (strain ATCC BAA-894) (Enterobacter sakazakii).